A 410-amino-acid chain; its full sequence is SPbeta prophage-derived uncharacterized protein YonV (410 aa).

This chain is SPbeta prophage-derived uncharacterized protein YonV (yonV), found in Bacillus subtilis (strain 168).